A 254-amino-acid polypeptide reads, in one-letter code: Phosphate import ATP-binding protein PstB (254 aa).

Positions 7–249 (MVAESMSFYY…PREKQTEDYI (243 aa)) constitute an ABC transporter domain. An ATP-binding site is contributed by 39–46 (GPSGCGKS).

It belongs to the ABC transporter superfamily. Phosphate importer (TC 3.A.1.7) family. As to quaternary structure, the complex is composed of two ATP-binding proteins (PstB), two transmembrane proteins (PstC and PstA) and a solute-binding protein (PstS).

The protein resides in the cell inner membrane. The enzyme catalyses phosphate(out) + ATP + H2O = ADP + 2 phosphate(in) + H(+). In terms of biological role, part of the ABC transporter complex PstSACB involved in phosphate import. Responsible for energy coupling to the transport system. This Chlorobium chlorochromatii (strain CaD3) protein is Phosphate import ATP-binding protein PstB.